We begin with the raw amino-acid sequence, 397 residues long: Translocase of chloroplast 34 homolog, chloroplastic (397 aa).

The tract at residues 1 to 72 (MAQPPRPAEE…SQPWAGLNRL (72 aa)) is disordered. Composition is skewed to acidic residues over residues 10 to 32 (EYDD…DDES) and 44 to 63 (AGDE…DEDS). The region spanning 90 to 321 (RKQLTVLLLG…YKYHPRLSSK (232 aa)) is the AIG1-type G domain. The tract at residues 99-106 (GKSSVGKS) is G1. Residues 102 to 107 (SVGKSS) and 121 to 126 (QAFKLQ) each bind GTP. Ser106 is a Mg(2+) binding site. A homodimerization region spans residues 121-124 (QAFK). Positions 126–130 (QADTD) are G2. The tract at residues 155 to 158 (DTCG) is G3. The segment at 193–198 (RLDLYR) is homodimerization. The segment at 227 to 230 (THAN) is G4. Residues His228 and 271–272 (EN) each bind GTP. The segment at 271–273 (ENS) is G5. A helical membrane pass occupies residues 329–349 (LLPVAIAAEVLFYRRFLHPRL). An AKR2A-binding sequence (ABS) required for chloroplast outer envelope membrane targeting motif is present at residues 350–358 (DDNQRRVER).

Belongs to the TRAFAC class TrmE-Era-EngA-EngB-Septin-like GTPase superfamily. AIG1/Toc34/Toc159-like paraseptin GTPase family. TOC34 subfamily. In terms of assembly, homodimer, heterodimer with other TOC proteins, and monomer. Part of the TOC core complex that includes 1 protein for the specific recognition of transit peptides surrounded by a ring composed of four proteins forming translocation channels, and four to five GTP-binding proteins providing energy. This core complex can interact with components of the TIC complex to form a larger import complex. Interacts with ARSA1. The cofactor is Mg(2+).

It localises to the plastid. The protein localises to the chloroplast outer membrane. GTPase involved in protein precursor import into chloroplasts. Seems to recognize chloroplast-destined precursor proteins and regulate their presentation to the translocation channel through GTP hydrolysis. Functions as an essential component of the outer chloroplast membrane translocon (TOC) complex, which, in turn, catalyzes the import of nucleus-encoded precursor polypeptides from the cytoplasm to the chloroplast. The polypeptide is Translocase of chloroplast 34 homolog, chloroplastic (Chlamydomonas reinhardtii (Chlamydomonas smithii)).